Reading from the N-terminus, the 721-residue chain is Polyribonucleotide nucleotidyltransferase (721 aa).

The Mg(2+) site is built by Asp486 and Asp492. Residues 553 to 612 (PKIVQLQIDIDKISLVIGSTGKTVKAITDEFEVKVQIEQNGKIILFGDDDFKMQKAKERI) form the KH domain. The 95-residue stretch at 622–716 (GEIYEGIVKK…KFGKIDLEVV (95 aa)) folds into the S1 motif domain.

This sequence belongs to the polyribonucleotide nucleotidyltransferase family. Mg(2+) is required as a cofactor.

Its subcellular location is the cytoplasm. It carries out the reaction RNA(n+1) + phosphate = RNA(n) + a ribonucleoside 5'-diphosphate. Involved in mRNA degradation. Catalyzes the phosphorolysis of single-stranded polyribonucleotides processively in the 3'- to 5'-direction. This chain is Polyribonucleotide nucleotidyltransferase, found in Borrelia garinii subsp. bavariensis (strain ATCC BAA-2496 / DSM 23469 / PBi) (Borreliella bavariensis).